The chain runs to 214 residues: Probable transaldolase (214 aa).

Residue Lys83 is the Schiff-base intermediate with substrate of the active site.

The protein belongs to the transaldolase family. Type 3B subfamily.

The protein localises to the cytoplasm. It catalyses the reaction D-sedoheptulose 7-phosphate + D-glyceraldehyde 3-phosphate = D-erythrose 4-phosphate + beta-D-fructose 6-phosphate. The protein operates within carbohydrate degradation; pentose phosphate pathway; D-glyceraldehyde 3-phosphate and beta-D-fructose 6-phosphate from D-ribose 5-phosphate and D-xylulose 5-phosphate (non-oxidative stage): step 2/3. Functionally, transaldolase is important for the balance of metabolites in the pentose-phosphate pathway. This Thermodesulfovibrio yellowstonii (strain ATCC 51303 / DSM 11347 / YP87) protein is Probable transaldolase.